Consider the following 146-residue polypeptide: Transcriptional regulator MraZ (146 aa).

SpoVT-AbrB domains are found at residues 7-54 and 83-126; these read NATN…GLDL and GVFV…QPEA.

Belongs to the MraZ family. As to quaternary structure, forms oligomers.

It localises to the cytoplasm. The protein resides in the nucleoid. This is Transcriptional regulator MraZ from Rhizobium rhizogenes (strain K84 / ATCC BAA-868) (Agrobacterium radiobacter).